A 185-amino-acid chain; its full sequence is Ubiquitin-conjugating enzyme E2 5 (185 aa).

The region spanning 1 to 148 (MSSPSKRREM…VKEYCEKYAK (148 aa)) is the UBC core domain. Cys85 serves as the catalytic Glycyl thioester intermediate. Residues 146–185 (YAKPRADTEEMSSDDEMSEDEYASDGDDEDDVAIAGKLDP) form a disordered region. Positions 154–177 (EEMSSDDEMSEDEYASDGDDEDDV) are enriched in acidic residues.

Belongs to the ubiquitin-conjugating enzyme family. Expressed in developing ovules, but not in vascular tissues.

The catalysed reaction is S-ubiquitinyl-[E1 ubiquitin-activating enzyme]-L-cysteine + [E2 ubiquitin-conjugating enzyme]-L-cysteine = [E1 ubiquitin-activating enzyme]-L-cysteine + S-ubiquitinyl-[E2 ubiquitin-conjugating enzyme]-L-cysteine.. It participates in protein modification; protein ubiquitination. Accepts the ubiquitin from the E1 complex and catalyzes its covalent attachment to other proteins. The protein is Ubiquitin-conjugating enzyme E2 5 (UBC5) of Arabidopsis thaliana (Mouse-ear cress).